Reading from the N-terminus, the 522-residue chain is Sorting nexin-1 (522 aa).

The tract at residues 1 to 142 (MASGGGGCSA…ELEEEEQEDQ (142 aa)) is disordered. Phosphoserine is present on residues Ser32 and Ser39. Acidic residues predominate over residues 35-45 (EAGDSDTEGED). Phosphothreonine occurs at positions 41 and 48. Ser58 and Ser72 each carry phosphoserine. Residues 132–142 (EELEEEEQEDQ) show a composition bias toward acidic residues. A PX domain is found at 143 to 272 (FDLTVGITDP…EFLEKEELPR (130 aa)). A 1,2-diacyl-sn-glycero-3-phospho-(1D-myo-inositol-3-phosphate) contacts are provided by Arg186, Ser188, and Lys214. Ser188 carries the phosphoserine modification. The residue at position 237 (Lys237) is an N6-acetyllysine. Position 238 (Arg238) interacts with a 1,2-diacyl-sn-glycero-3-phospho-(1D-myo-inositol-3-phosphate). A Phosphoserine modification is found at Ser280. Residues 281-298 (GAGLLKMFNKATDAVSKM) form a membrane-binding amphipathic helix region. The BAR domain occupies 302 to 522 (MNESDIWFEE…AFLPEAKAIS (221 aa)).

The protein belongs to the sorting nexin family. As to quaternary structure, predominantly forms heterodimers with BAR domain-containing sorting nexins SNX5, SNX6 and SNX32; can self-associate to form homodimers. The heterodimers are proposed to self-assemble into helical arrays on the membrane to stabilize and expand local membrane curvature underlying endosomal tubule formation. Thought to be a component of the originally described retromer complex (also called SNX-BAR retromer) which is a pentamer containing the heterotrimeric retromer cargo-selective complex (CSC), also described as vacuolar protein sorting subcomplex (VPS) and a heterodimeric membrane-deforming subcomplex formed between SNX1 or SNX2 and SNX5 or SNX6 (also called SNX-BAR subcomplex); the respective CSC and SNX-BAR subcomplexes associate with low affinity. Interacts with SNX5, SNX6, SNX32, VPS26A, VPS29, VPS35, DRD5, DENND5A, KALRN, RHOG (GDP-bound form). The interaction with SNX2 is reported controversially. Interacts with DNAJC13; prevented by presence of HGS. Interacts with HGS.

It localises to the endosome membrane. The protein resides in the golgi apparatus. Its subcellular location is the trans-Golgi network membrane. It is found in the early endosome membrane. The protein localises to the cell projection. It localises to the lamellipodium. Involved in several stages of intracellular trafficking. Interacts with membranes containing phosphatidylinositol 3-phosphate (PtdIns(3P)) or phosphatidylinositol 3,5-bisphosphate (PtdIns(3,5)P2). Acts in part as component of the retromer membrane-deforming SNX-BAR subcomplex. The SNX-BAR retromer mediates retrograde transport of cargo proteins from endosomes to the trans-Golgi network (TGN) and is involved in endosome-to-plasma membrane transport for cargo protein recycling. The SNX-BAR subcomplex functions to deform the donor membrane into a tubular profile called endosome-to-TGN transport carrier (ETC). Can sense membrane curvature and has in vitro vesicle-to-membrane remodeling activity. Involved in retrograde endosome-to-TGN transport of lysosomal enzyme receptors (IGF2R, M6PR and SORT1). Plays a role in targeting ligand-activated EGFR to the lysosomes for degradation after endocytosis from the cell surface and release from the Golgi. Involvement in retromer-independent endocytic trafficking of P2RY1 and lysosomal degradation of protease-activated receptor-1/F2R. Promotes KALRN- and RHOG-dependent but retromer-independent membrane remodeling such as lamellipodium formation; the function is dependent on GEF activity of KALRN. Required for endocytosis of DRD5 upon agonist stimulation but not for basal receptor trafficking. The protein is Sorting nexin-1 (SNX1) of Bos taurus (Bovine).